A 75-amino-acid polypeptide reads, in one-letter code: MPHIDIKCFPRELDEQQKAALAADITDVIIRHLNSKDSSISIALQQIQPESWQAIWDTEIAPQMETLIKKPGYSM.

The Proton acceptor; via imino nitrogen role is filled by Pro2.

It belongs to the 4-oxalocrotonate tautomerase family. PptA subfamily. As to quaternary structure, homodimer.

The protein localises to the cytoplasm. The polypeptide is Tautomerase PptA (Escherichia coli (strain SMS-3-5 / SECEC)).